Reading from the N-terminus, the 363-residue chain is Alanine racemase (363 aa).

K34 serves as the catalytic Proton acceptor; specific for D-alanine. K34 carries the post-translational modification N6-(pyridoxal phosphate)lysine. A substrate-binding site is contributed by R129. The Proton acceptor; specific for L-alanine role is filled by Y256. Position 304 (M304) interacts with substrate.

The protein belongs to the alanine racemase family. Pyridoxal 5'-phosphate serves as cofactor.

It catalyses the reaction L-alanine = D-alanine. It participates in amino-acid biosynthesis; D-alanine biosynthesis; D-alanine from L-alanine: step 1/1. Its function is as follows. Catalyzes the interconversion of L-alanine and D-alanine. May also act on other amino acids. The chain is Alanine racemase (alr) from Edwardsiella ictaluri (strain 93-146).